Consider the following 326-residue polypeptide: Trans-L-3-hydroxyproline dehydratase (326 aa).

The active-site Proton acceptor is Cys-80. Residues 81–82 (GH), Asp-241, and 246–247 (GS) contribute to the substrate site.

The protein belongs to the proline racemase family. Homodimer.

The catalysed reaction is trans-3-hydroxy-L-proline = 1-pyrroline-2-carboxylate + H2O. Functionally, catalyzes the dehydration of trans-3-hydroxy-L-proline to delta-1-pyrroline-2-carboxylate (Pyr2C). The protein is Trans-L-3-hydroxyproline dehydratase (l3hypdh) of Saccoglossus kowalevskii (Acorn worm).